Consider the following 202-residue polypeptide: Ribonuclease HII (202 aa).

One can recognise an RNase H type-2 domain in the interval 12 to 201 (LLIAGVDEAG…VRQLKLFIPE (190 aa)). Asp-18, Glu-19, and Asp-110 together coordinate a divalent metal cation.

The protein belongs to the RNase HII family. Requires Mn(2+) as cofactor. It depends on Mg(2+) as a cofactor.

The protein localises to the cytoplasm. The catalysed reaction is Endonucleolytic cleavage to 5'-phosphomonoester.. In terms of biological role, endonuclease that specifically degrades the RNA of RNA-DNA hybrids. In Coxiella burnetii (strain CbuK_Q154) (Coxiella burnetii (strain Q154)), this protein is Ribonuclease HII.